An 854-amino-acid chain; its full sequence is MATKSTEKHTPMMQQYLRLKSENPDILLFYRMGDFYELFYDDAKRASQLLEISLTKRGSSAGEPIPMAGIPYHAVEGYLAKLVQQGESVAICEQIGDPATSKGPVERKVVRIVTPGTVTDEALLPERFDNLIAAIYHHKGQFGYATLDITSGRFKVSEPNTEEAMLAELQRTAPTELLFSEDFEPVHLLEKRNGNRRRPVWEFELDTAKQQLNNQFGTRDLVGFGVERAEFGLCAAGCLIQYVKDTQRTTLPHIRSIIMDHQDDSVILDAATRRNLEITQNLAGGFNHTLAEILDHTSTAMGSRLLKRWLHQPVRTHDVLNQRLDAIGELKESGLFADIAPQLKNIGDVERILARLALRSARPRDLARLRNALQQLPELSQTTQEFQQNHLLTLAASAQPIDSICELLERAIKENPPVVIRDGGVLADGYNEELDQWRDLANGATQYLEKLEQEERERHDIDTLKVGYNNVHGFYIQISKGQSHKAPAHYVRRQTLKNAERYIIPELKEHEDKVLNSKSKALAIEKRLWEELFDQLLPHLEQLQSMANAISELDVLSNLAERADTLNYCRPVLTKETGINIEGGRHPVVEQVMSDPFIANPIKLNPDRKMLIITGPNMGGKSTYMRQTALIALMAHVGCYVPADSAEIGTLDRIFTRIGASDDLASGRSTFMVEMTETANILHNATKHSLVLMDEIGRGTSTYDGLSLAWASAEWLATKINAMTLFATHYFELTELPNLFTGLANVHLDAVEHGDEIAFMHAVQEGAANKSYGLAVASLAGVPKSVIKKAKQKLQHLESGQVSVPATSTTVKEEHQLSLIPEISEVEEALANVNPDDLTPRQALEELYRLKALL.

615 to 622 (GPNMGGKS) lines the ATP pocket.

The protein belongs to the DNA mismatch repair MutS family.

In terms of biological role, this protein is involved in the repair of mismatches in DNA. It is possible that it carries out the mismatch recognition step. This protein has a weak ATPase activity. The protein is DNA mismatch repair protein MutS of Aliivibrio fischeri (strain MJ11) (Vibrio fischeri).